The chain runs to 272 residues: Nitrogenase iron protein (272 aa).

Residue 8 to 15 (GKGGIGKS) participates in ATP binding. Cys94 lines the [4Fe-4S] cluster pocket. An ADP-ribosylarginine; by dinitrogenase reductase ADP-ribosyltransferase modification is found at Arg97. Cys129 provides a ligand contact to [4Fe-4S] cluster.

This sequence belongs to the NifH/BchL/ChlL family. As to quaternary structure, homodimer. Requires [4Fe-4S] cluster as cofactor. The reversible ADP-ribosylation of Arg-97 inactivates the nitrogenase reductase and regulates nitrogenase activity.

The catalysed reaction is N2 + 8 reduced [2Fe-2S]-[ferredoxin] + 16 ATP + 16 H2O = H2 + 8 oxidized [2Fe-2S]-[ferredoxin] + 2 NH4(+) + 16 ADP + 16 phosphate + 6 H(+). In terms of biological role, the key enzymatic reactions in nitrogen fixation are catalyzed by the nitrogenase complex, which has 2 components: the iron protein and the molybdenum-iron protein. The sequence is that of Nitrogenase iron protein from Clostridium acetobutylicum (strain ATCC 824 / DSM 792 / JCM 1419 / IAM 19013 / LMG 5710 / NBRC 13948 / NRRL B-527 / VKM B-1787 / 2291 / W).